We begin with the raw amino-acid sequence, 274 residues long: 2,3,4,5-tetrahydropyridine-2,6-dicarboxylate N-succinyltransferase (274 aa).

Positions 104 and 141 each coordinate substrate.

The protein belongs to the transferase hexapeptide repeat family. In terms of assembly, homotrimer.

The protein resides in the cytoplasm. It carries out the reaction (S)-2,3,4,5-tetrahydrodipicolinate + succinyl-CoA + H2O = (S)-2-succinylamino-6-oxoheptanedioate + CoA. It participates in amino-acid biosynthesis; L-lysine biosynthesis via DAP pathway; LL-2,6-diaminopimelate from (S)-tetrahydrodipicolinate (succinylase route): step 1/3. This is 2,3,4,5-tetrahydropyridine-2,6-dicarboxylate N-succinyltransferase from Sodalis glossinidius (strain morsitans).